The following is a 92-amino-acid chain: Putative transition state regulator Abh (92 aa).

Residues 5–50 (GVVRKVDELGRIVMPIELRRALDIAIKDSIEFFVDGDKIILKKYKP) form the SpoVT-AbrB domain.

It to B.subtilis AbrB and SpoVT.

The protein is Putative transition state regulator Abh (abh) of Bacillus subtilis (strain 168).